Consider the following 235-residue polypeptide: Exotoxin type C (235 aa).

Residues 1-27 form the signal peptide; it reads MKKINIIKIVFIITVILISTISPIIKS. The Zn(2+) site is built by His194, His228, and Asp230.

Belongs to the staphylococcal/streptococcal toxin family.

Functionally, superantigen that acts as a causative agent of the symptoms associated with scarlet fever. Has been associated with streptococcal toxic shock-like disease and may play a role in the early events of rheumatic fever. Superantigens cross-link major histocompatibility complex (MHC) class II and T-cell receptor (TCR) molecules, resulting in an overstimulation of T-cells associated with a massive release of pyrogenic and inflammatory cytokines. This Streptococcus pyogenes serotype M1 protein is Exotoxin type C (speC).